Reading from the N-terminus, the 376-residue chain is Crh-like protein 4 (376 aa).

Residues 1–21 (MFPKIFLTAATALLSAKSTFA) form the signal peptide. One can recognise a GH16 domain in the interval 22-229 (QTYSSCNPLF…WARGPTDYSN (208 aa)). Residues Cys-27 and Cys-35 are joined by a disulfide bond. Glu-119 acts as the Nucleophile in catalysis. Glu-123 functions as the Proton donor in the catalytic mechanism. Chitin contacts are provided by Glu-123, Lys-202, Trp-206, and Thr-217. The GPI-anchor amidated serine moiety is linked to residue Ser-346. Positions 347 to 376 (ASPINISRINPLLLCGPFTFFFFAAIRRWP) are cleaved as a propeptide — removed in mature form. Asn-351 is a glycosylation site (N-linked (GlcNAc...) asparagine).

This sequence belongs to the glycosyl hydrolase 16 family. CRH1 subfamily.

It is found in the cell membrane. The catalysed reaction is Random endo-hydrolysis of N-acetyl-beta-D-glucosaminide (1-&gt;4)-beta-linkages in chitin and chitodextrins.. Its function is as follows. Dual chitinase/transglycosylase that plays a role in cell wall architecture. Chitinase and transglycosylase activities are coupled. Required for the polysaccharide cross-linking at the septa and the cell wall. More specifically, transfers chitin to 1,6-beta-glucan in the cell wall. In Botryotinia fuckeliana (strain B05.10) (Noble rot fungus), this protein is Crh-like protein 4.